The chain runs to 297 residues: Acetaldehyde dehydrogenase (297 aa).

15–18 (SGSI) contributes to the NAD(+) binding site. The active-site Acyl-thioester intermediate is the Cys-130. NAD(+) contacts are provided by residues 162 to 170 (SAGIATREN) and Asn-272.

Belongs to the acetaldehyde dehydrogenase family.

The catalysed reaction is acetaldehyde + NAD(+) + CoA = acetyl-CoA + NADH + H(+). The sequence is that of Acetaldehyde dehydrogenase (mhpF) from Burkholderia thailandensis (strain ATCC 700388 / DSM 13276 / CCUG 48851 / CIP 106301 / E264).